The chain runs to 332 residues: Ethylene-responsive transcription factor ERF119 (332 aa).

Residues 1–33 (MAERKKRSSIQTNKPNKKPMKKKPFQLNHLPGL) are disordered. Basic residues predominate over residues 15 to 24 (PNKKPMKKKP). A DNA-binding region (AP2/ERF) is located at residues 130-187 (KPVGVRQRKWGKWAAEIRHPITKVRTWLGTYETLEQAADAYATKKLEFDALAAATSAA).

This sequence belongs to the AP2/ERF transcription factor family. ERF subfamily.

Its subcellular location is the nucleus. Functionally, probably acts as a transcriptional activator. Binds to the GCC-box pathogenesis-related promoter element. May be involved in the regulation of gene expression by stress factors and by components of stress signal transduction pathways. The sequence is that of Ethylene-responsive transcription factor ERF119 (ERF119) from Arabidopsis thaliana (Mouse-ear cress).